The sequence spans 322 residues: HPr kinase/phosphorylase (322 aa).

Residues histidine 146 and lysine 167 contribute to the active site. ATP is bound at residue 161-168; it reads GDSGLGKS. Serine 168 lines the Mg(2+) pocket. Residue aspartate 185 is the Proton acceptor; for phosphorylation activity. Proton donor; for dephosphorylation activity of the active site. The important for the catalytic mechanism of both phosphorylation and dephosphorylation stretch occupies residues 209-218; it reads LEVRGLGLLD. Glutamate 210 serves as a coordination point for Mg(2+). Residue arginine 250 is part of the active site. The tract at residues 271–276 is important for the catalytic mechanism of dephosphorylation; sequence QVAAGR.

It belongs to the HPrK/P family. In terms of assembly, homohexamer. Requires Mg(2+) as cofactor.

The enzyme catalyses [HPr protein]-L-serine + ATP = [HPr protein]-O-phospho-L-serine + ADP + H(+). It carries out the reaction [HPr protein]-O-phospho-L-serine + phosphate + H(+) = [HPr protein]-L-serine + diphosphate. Catalyzes the ATP- as well as the pyrophosphate-dependent phosphorylation of a specific serine residue in HPr, a phosphocarrier protein of the phosphoenolpyruvate-dependent sugar phosphotransferase system (PTS). HprK/P also catalyzes the pyrophosphate-producing, inorganic phosphate-dependent dephosphorylation (phosphorolysis) of seryl-phosphorylated HPr (P-Ser-HPr). The sequence is that of HPr kinase/phosphorylase from Burkholderia lata (strain ATCC 17760 / DSM 23089 / LMG 22485 / NCIMB 9086 / R18194 / 383).